Reading from the N-terminus, the 362-residue chain is Beta-ketoacyl-[acyl-carrier-protein] synthase III 2 (362 aa).

Active-site residues include Cys113 and His251. Residues 252-256 form an ACP-binding region; it reads QANIR. Asn281 is a catalytic residue.

The protein belongs to the thiolase-like superfamily. FabH family. In terms of assembly, homodimer.

The protein resides in the cytoplasm. It catalyses the reaction malonyl-[ACP] + acetyl-CoA + H(+) = 3-oxobutanoyl-[ACP] + CO2 + CoA. It functions in the pathway lipid metabolism; fatty acid biosynthesis. Functionally, catalyzes the condensation reaction of fatty acid synthesis by the addition to an acyl acceptor of two carbons from malonyl-ACP. Catalyzes the first condensation reaction which initiates fatty acid synthesis and may therefore play a role in governing the total rate of fatty acid production. Possesses both acetoacetyl-ACP synthase and acetyl transacylase activities. Its substrate specificity determines the biosynthesis of branched-chain and/or straight-chain of fatty acids. The polypeptide is Beta-ketoacyl-[acyl-carrier-protein] synthase III 2 (Vibrio vulnificus (strain CMCP6)).